The primary structure comprises 326 residues: Cytosolic sulfotransferase 7 (326 aa).

A 3'-phosphoadenylyl sulfate-binding site is contributed by 72–77 (KSGTTW). The active-site Proton acceptor is the H138. Residues R160, S168, Y226, and 292–294 (RKG) each bind 3'-phosphoadenylyl sulfate.

This sequence belongs to the sulfotransferase 1 family.

The protein localises to the cytoplasm. Sulfotransferase that utilizes 3'-phospho-5'-adenylyl sulfate (PAPS) as sulfonate donor. The sequence is that of Cytosolic sulfotransferase 7 (SOT7) from Arabidopsis thaliana (Mouse-ear cress).